The following is a 700-amino-acid chain: MAPADLASEGPKLEDPPAPHLFGKCPSGLIMAKLETLPVRADPGRDPLLAFAPRPSELGPPDPRLTMGSVGSGVTHAQEFPMKSVGTRTGGGGNQGSFPGPRSGGSGANRERPGRYPSEDKVLANSLYLNGELRGSDHTDVCGNVVGSSGGSSSSGGSDKAPPQYREPNHPPKLLTTSGKLDQCSEPLVRPSAFKPVVPKNFHSMQNLCPPQTNGTPEGRQGPAGLKGGLDKSRTMTPAGGSGGGLSDSGRNSLTSLPTYSSSYSQHLAPLSASTSHINRIGTAGYSSGSSGGGSGYQDLGTSDSGRASSKSGSSSSMGRSGHLGSGEGGNGGLPFAACSPPSPSALIQELEERLWEKEQEVAALRRSLEQSEAAVAQVLEERQKAWERELAELRQGCSGKLQQVARRAQRAQQGLQLQVLRLQQDKKQLQEEAAQLIRQREELEDKVAVCQKEQADFLPRMEETKWEVCQKAGEISLLKQQLKDSQADVSQKLSEIVGLRSQLREGRASLREKEEQLLSLRDSFGSKQASLELSEGELPPACLKPALTPVDLVEPQEALASCESDEAKMRRQAGVAAAASLVSVDGEVEAGGEGGTRALRREVGRLQAELAAERRARERQGASFAEERRVWLEEKEKVIEYQKQLQLSYVEMYQRNQQLERRLRERGAAGGSSTPTPQHGEEKKAWTPSRLERIESTEI.

Disordered regions lie at residues 1–20 (MAPADLASEGPKLEDPPAPH), 40–121 (RADP…SEDK), 133–188 (LRGS…SEPL), and 202–344 (FHSM…PPSP). Residues 109-121 (NRERPGRYPSEDK) are compositionally biased toward basic and acidic residues. The span at 203 to 216 (HSMQNLCPPQTNGT) shows a compositional bias: polar residues. 2 stretches are compositionally biased toward low complexity: residues 248 to 265 (DSGRNSLTSLPTYSSSYS) and 301 to 321 (GTSDSGRASSKSGSSSSMGRS). Positions 322-333 (GHLGSGEGGNGG) are enriched in gly residues. Residues S343 and S345 each carry the phosphoserine modification. 2 coiled-coil regions span residues 345–523 (SALI…SLRD) and 597–666 (TRAL…RLRE). The tract at residues 662-700 (RRLRERGAAGGSSTPTPQHGEEKKAWTPSRLERIESTEI) is disordered. Over residues 680–700 (HGEEKKAWTPSRLERIESTEI) the composition is skewed to basic and acidic residues.

The protein belongs to the LZTS3 family. In terms of assembly, interacts (via C-terminus) with SHANK3 (via PDZ domain). Interacts (via coiled coil) with SIPA1L1. Can form homooligomers.

The protein resides in the synapse. It localises to the postsynaptic density. It is found in the cell projection. The protein localises to the dendritic spine. Its subcellular location is the dendrite. The protein resides in the cytoplasm. It localises to the cytoskeleton. May be involved in promoting the maturation of dendritic spines, probably via regulating SIPA1L1 levels at the postsynaptic density of synapses. This chain is Leucine zipper putative tumor suppressor 3, found in Mus musculus (Mouse).